Reading from the N-terminus, the 66-residue chain is Large ribosomal subunit protein bL35 (66 aa).

The protein belongs to the bacterial ribosomal protein bL35 family.

The chain is Large ribosomal subunit protein bL35 from Borrelia garinii subsp. bavariensis (strain ATCC BAA-2496 / DSM 23469 / PBi) (Borreliella bavariensis).